Consider the following 522-residue polypeptide: MELVLNSTTIGVGVVSLILLLYLFLRGGSWKSGEEGPPTVAGAWPIIGHLPLLLGSKTPHKTLGDLADKYGPIFSIKIGAKNAVVVSNWEMAKECYTTNDIAVSSLPDLISANLLCYNRSMIVVAPYGPYWRQLRKILMSEFLSPSRVEQLHHVRVSEVQSSITELFRDWRSNKNVQSGFATVELKQWFSLLVFNMILRMVCGKRYFSASTSDDEKANRCVKAVDEFVRLAATFTVGDAIPYLRWFDFGGYENDMRETGKELDEIIGEWLDEHRQKRKMGENVQDLMSVLLSLLEGKTIEGMNVDIVIKSFVLTVIQAGTEASITTLIWATSLILNNPSVLEKLKAELDIQVGKERYICESDLSKLTYLQAVVKETLRLYPPAPLSRPREFEEDCTIGGYTVKKGTRLITNLSKIHTDHNVWSNPLEFKPERFLTTDKDIDMKGQHFQLLPFGGGRRICPGINLGLQTVRLTLASFLHSFEILNPSTEPLDMTEVFRATNTKATPLEILIKPRLSPSCYESI.

Cys459 provides a ligand contact to heme.

It belongs to the cytochrome P450 family. Requires heme as cofactor.

Its subcellular location is the membrane. The sequence is that of Cytochrome P450 82A2 (CYP82A2) from Glycine max (Soybean).